The following is a 440-amino-acid chain: MDTKSVQVQSPATPVYILRGHASPVHALHIYSQNLRLVSGDANGWIVVWDLVTKRPVTAWKAHEGAVLEARGFDVGSGATEIYTHGRDHKLCVWKLRPEDETFLNKTLPVDATESAQPGSKTQPWLLHSLPVNALNFCAFSMAFVNPDGLPAFPSQSGRPENTLFAVPNALDSGGVDIFHLPSERRISTIPSEQSPKTGMLMAVNLFISPSGDLYVASAYEDGHVMVFVHRGALKSASFEREYISNNPLKWDKLYAGRPHSQPVLSLDVAPSHGYFISSSADALIVKHPIPNTGSAGYIPTAGYKEESPLKIVNTKHSGQQGLRIRSDEKVFATAGWDSRIRVYSGKTMKELAVLKWHKDGCYSIAFGDTESMSSLVSPSSESAKQEPRDADQGAAGQTTVDGRNYSLATVQQQRNQKVQQTHWLAAGSKDGKISLWDIY.

7 WD repeats span residues 20–59 (GHAS…PVTA), 62–104 (AHEG…ETFL), 196–238 (PKTG…KSAS), 259–300 (PHSQ…GYIP), 315–354 (TKHS…ELAV), 357–399 (WHKD…AGQT), and 403–440 (GRNY…WDIY). Residues 376–399 (LVSPSSESAKQEPRDADQGAAGQT) are disordered.

The protein belongs to the WD repeat ASA1 family. In terms of assembly, component of the ASTRA chromatin remodeling machinery complex.

It localises to the nucleus. In terms of biological role, component of the ASTRA complex involved in chromatin remodeling. The protein is ASTRA-associated protein 1 (asa1) of Penicillium rubens (strain ATCC 28089 / DSM 1075 / NRRL 1951 / Wisconsin 54-1255) (Penicillium chrysogenum).